Here is a 128-residue protein sequence, read N- to C-terminus: Serum amyloid A-4 protein (128 aa).

The signal sequence occupies residues 1 to 18 (MKLFIGLIFCSLVMGVSS). The tract at residues 93–128 (SSEREEDQVSNRRAEEWGRSGQDPDHFRPAGLPKKY) is disordered. A compositionally biased stretch (basic and acidic residues) spans 99 to 120 (DQVSNRRAEEWGRSGQDPDHFR).

This sequence belongs to the SAA family. In terms of assembly, apolipoprotein of the HDL complex.

The protein resides in the secreted. Major acute phase reactant. This chain is Serum amyloid A-4 protein, found in Sus scrofa (Pig).